We begin with the raw amino-acid sequence, 177 residues long: B-phycoerythrin beta chain (177 aa).

The phycourobilin site is built by Cys-50 and Cys-61. Asn-72 bears the N4-methylasparagine mark. The (2R,3E)-phycoerythrobilin site is built by Cys-82 and Cys-158.

Belongs to the phycobiliprotein family. In terms of assembly, heteromer of 6 alpha, 6 beta and one gamma chain. Contains two covalently linked phycoerythrobilin chromophores and one covalently linked phycourobilin chromophore.

The protein localises to the plastid. Its subcellular location is the chloroplast thylakoid membrane. Its function is as follows. Light-harvesting photosynthetic bile pigment-protein from the phycobiliprotein complex. The chain is B-phycoerythrin beta chain (cpeB) from Rhodella violacea (Red alga).